Reading from the N-terminus, the 547-residue chain is Chaperonin GroEL (547 aa).

ATP contacts are provided by residues 29–32 (TLGP), 86–90 (DGTTT), Gly413, 479–481 (NAA), and Asp495.

Belongs to the chaperonin (HSP60) family. Forms a cylinder of 14 subunits composed of two heptameric rings stacked back-to-back. Interacts with the co-chaperonin GroES.

It is found in the cytoplasm. It carries out the reaction ATP + H2O + a folded polypeptide = ADP + phosphate + an unfolded polypeptide.. Functionally, together with its co-chaperonin GroES, plays an essential role in assisting protein folding. The GroEL-GroES system forms a nano-cage that allows encapsulation of the non-native substrate proteins and provides a physical environment optimized to promote and accelerate protein folding. The protein is Chaperonin GroEL of Synechococcus sp. (strain RCC307).